The following is a 600-amino-acid chain: Elongation factor 4 (600 aa).

Positions 5–187 constitute a tr-type G domain; it reads KYIRNFSIIA…AIVNKLHPPK (183 aa). GTP is bound by residues 17–22 and 134–137; these read DHGKST and NKID.

Belongs to the TRAFAC class translation factor GTPase superfamily. Classic translation factor GTPase family. LepA subfamily.

The protein resides in the cell inner membrane. The catalysed reaction is GTP + H2O = GDP + phosphate + H(+). In terms of biological role, required for accurate and efficient protein synthesis under certain stress conditions. May act as a fidelity factor of the translation reaction, by catalyzing a one-codon backward translocation of tRNAs on improperly translocated ribosomes. Back-translocation proceeds from a post-translocation (POST) complex to a pre-translocation (PRE) complex, thus giving elongation factor G a second chance to translocate the tRNAs correctly. Binds to ribosomes in a GTP-dependent manner. The protein is Elongation factor 4 of Rickettsia akari (strain Hartford).